The chain runs to 560 residues: Dihydroxy-acid dehydratase (560 aa).

Residue Cys-52 coordinates [2Fe-2S] cluster. Position 84 (Asp-84) interacts with Mg(2+). A [2Fe-2S] cluster-binding site is contributed by Cys-125. Residues Asp-126 and Lys-127 each contribute to the Mg(2+) site. Lys-127 is subject to N6-carboxylysine. Position 197 (Cys-197) interacts with [2Fe-2S] cluster. Glu-448 contributes to the Mg(2+) binding site. The active-site Proton acceptor is the Ser-474.

It belongs to the IlvD/Edd family. In terms of assembly, homodimer. It depends on [2Fe-2S] cluster as a cofactor. The cofactor is Mg(2+).

The enzyme catalyses (2R)-2,3-dihydroxy-3-methylbutanoate = 3-methyl-2-oxobutanoate + H2O. The catalysed reaction is (2R,3R)-2,3-dihydroxy-3-methylpentanoate = (S)-3-methyl-2-oxopentanoate + H2O. It participates in amino-acid biosynthesis; L-isoleucine biosynthesis; L-isoleucine from 2-oxobutanoate: step 3/4. It functions in the pathway amino-acid biosynthesis; L-valine biosynthesis; L-valine from pyruvate: step 3/4. In terms of biological role, functions in the biosynthesis of branched-chain amino acids. Catalyzes the dehydration of (2R,3R)-2,3-dihydroxy-3-methylpentanoate (2,3-dihydroxy-3-methylvalerate) into 2-oxo-3-methylpentanoate (2-oxo-3-methylvalerate) and of (2R)-2,3-dihydroxy-3-methylbutanoate (2,3-dihydroxyisovalerate) into 2-oxo-3-methylbutanoate (2-oxoisovalerate), the penultimate precursor to L-isoleucine and L-valine, respectively. The chain is Dihydroxy-acid dehydratase from Leptospira borgpetersenii serovar Hardjo-bovis (strain JB197).